A 466-amino-acid chain; its full sequence is Asparagine--tRNA ligase (466 aa).

This sequence belongs to the class-II aminoacyl-tRNA synthetase family. As to quaternary structure, homodimer.

The protein localises to the cytoplasm. The enzyme catalyses tRNA(Asn) + L-asparagine + ATP = L-asparaginyl-tRNA(Asn) + AMP + diphosphate + H(+). In Psychromonas ingrahamii (strain DSM 17664 / CCUG 51855 / 37), this protein is Asparagine--tRNA ligase.